The sequence spans 347 residues: Quinolinate synthase (347 aa).

Iminosuccinate is bound by residues His47 and Ser68. Cys113 contacts [4Fe-4S] cluster. Iminosuccinate-binding positions include 139-141 and Ser156; that span reads YAN. Cys200 contacts [4Fe-4S] cluster. Residues 226–228 and Thr243 contribute to the iminosuccinate site; that span reads HPE. Cys297 contacts [4Fe-4S] cluster.

It belongs to the quinolinate synthase family. Type 1 subfamily. It depends on [4Fe-4S] cluster as a cofactor.

The protein localises to the cytoplasm. The catalysed reaction is iminosuccinate + dihydroxyacetone phosphate = quinolinate + phosphate + 2 H2O + H(+). It functions in the pathway cofactor biosynthesis; NAD(+) biosynthesis; quinolinate from iminoaspartate: step 1/1. Functionally, catalyzes the condensation of iminoaspartate with dihydroxyacetone phosphate to form quinolinate. In Enterobacter sp. (strain 638), this protein is Quinolinate synthase.